Reading from the N-terminus, the 316-residue chain is Probable cell division protein WhiA (316 aa).

Residues 274–308 constitute a DNA-binding region (H-T-H motif); it reads SLKELGEMVSTGVISKSGVNHRLRKIDEIAEKLRN.

It belongs to the WhiA family.

In terms of biological role, involved in cell division and chromosome segregation. The chain is Probable cell division protein WhiA from Macrococcus caseolyticus (strain JCSC5402) (Macrococcoides caseolyticum).